The sequence spans 156 residues: Small ribosomal subunit protein uS7 (156 aa).

This sequence belongs to the universal ribosomal protein uS7 family. In terms of assembly, part of the 30S ribosomal subunit. Contacts proteins S9 and S11.

Functionally, one of the primary rRNA binding proteins, it binds directly to 16S rRNA where it nucleates assembly of the head domain of the 30S subunit. Is located at the subunit interface close to the decoding center, probably blocks exit of the E-site tRNA. This is Small ribosomal subunit protein uS7 from Clostridioides difficile (strain 630) (Peptoclostridium difficile).